A 117-amino-acid polypeptide reads, in one-letter code: Small ribosomal subunit protein bS6m (117 aa).

The protein belongs to the bacterial ribosomal protein bS6 family. In terms of assembly, component of the mitochondrial small ribosomal subunit (mt-SSU). Mature N.crassa 74S mitochondrial ribosomes consist of a small (37S) and a large (54S) subunit. The 37S small subunit contains a 16S ribosomal RNA (16S mt-rRNA) and 32 different proteins. The 54S large subunit contains a 23S rRNA (23S mt-rRNA) and 42 different proteins.

Its subcellular location is the mitochondrion. In terms of biological role, component of the mitochondrial ribosome (mitoribosome), a dedicated translation machinery responsible for the synthesis of mitochondrial genome-encoded proteins, including at least some of the essential transmembrane subunits of the mitochondrial respiratory chain. The mitoribosomes are attached to the mitochondrial inner membrane and translation products are cotranslationally integrated into the membrane. In Neurospora crassa (strain ATCC 24698 / 74-OR23-1A / CBS 708.71 / DSM 1257 / FGSC 987), this protein is Small ribosomal subunit protein bS6m (mrp17).